Consider the following 141-residue polypeptide: MYRIGELAKMAEVTPDTIRYYEKQQMMEHEVRTEGGFRLYTESDLQRLKFIRHARQLGFSLESIRELLSIRIDPEHHTCQESKGIVQERLQEVEARIAELQSMQRSLQRLNDACCGTAHSSVYCSILEALEQGASGVKSGC.

The HTH merR-type domain occupies 1–70 (MYRIGELAKM…LESIRELLSI (70 aa)). The H-T-H motif DNA-binding region spans 4 to 23 (IGELAKMAEVTPDTIRYYEK). Residues Cys-114, Cys-115, His-119, and Cys-124 each coordinate Zn(2+).

As to quaternary structure, homodimer.

In terms of biological role, zinc-responsive transcriptional regulator of zntA. The sequence is that of HTH-type transcriptional regulator ZntR (zntR) from Escherichia coli O157:H7.